The primary structure comprises 547 residues: Chaperonin GroEL (547 aa).

Residues 30 to 33 (TLGP), lysine 51, 87 to 91 (DGTTT), glycine 415, 479 to 481 (NAA), and aspartate 495 contribute to the ATP site. The tract at residues 525-547 (PKEDSPGAGAGMGGMGGMGGMDM) is disordered. Residues 532–547 (AGAGMGGMGGMGGMDM) are compositionally biased toward gly residues.

Belongs to the chaperonin (HSP60) family. In terms of assembly, forms a cylinder of 14 subunits composed of two heptameric rings stacked back-to-back. Interacts with the co-chaperonin GroES.

Its subcellular location is the cytoplasm. It catalyses the reaction ATP + H2O + a folded polypeptide = ADP + phosphate + an unfolded polypeptide.. Functionally, together with its co-chaperonin GroES, plays an essential role in assisting protein folding. The GroEL-GroES system forms a nano-cage that allows encapsulation of the non-native substrate proteins and provides a physical environment optimized to promote and accelerate protein folding. This is Chaperonin GroEL from Nitrosomonas europaea (strain ATCC 19718 / CIP 103999 / KCTC 2705 / NBRC 14298).